The sequence spans 150 residues: Nascent polypeptide-associated complex subunit beta (150 aa).

Disordered stretches follow at residues 1-45 (MADV…LQQS) and 123-150 (YQNM…NKVE). Residues 23 to 32 (TPRRKVKRAP) show a composition bias toward basic residues. The NAC-A/B domain maps to 36–101 (GADDKKLQQS…GEDKELTELV (66 aa)).

This sequence belongs to the NAC-beta family. In terms of assembly, part of the nascent polypeptide-associated complex (NAC), consisting of EGD2 and EGD1. NAC associates with ribosomes via EGD1.

It is found in the cytoplasm. It localises to the nucleus. Functionally, component of the nascent polypeptide-associated complex (NAC), a dynamic component of the ribosomal exit tunnel, protecting the emerging polypeptides from interaction with other cytoplasmic proteins to ensure appropriate nascent protein targeting. The NAC complex also promotes mitochondrial protein import by enhancing productive ribosome interactions with the outer mitochondrial membrane and blocks the inappropriate interaction of ribosomes translating non-secretory nascent polypeptides with translocation sites in the membrane of the endoplasmic reticulum. EGD1 may act as a transcription factor that exert a negative effect on the expression of several genes that are transcribed by RNA polymerase II. The polypeptide is Nascent polypeptide-associated complex subunit beta (EGD1) (Chaetomium globosum (strain ATCC 6205 / CBS 148.51 / DSM 1962 / NBRC 6347 / NRRL 1970) (Soil fungus)).